The following is a 526-amino-acid chain: Bifunctional purine biosynthesis protein PurH (526 aa).

Residues 1-145 (MSKAPLALLS…KNHAHVGIVT (145 aa)) enclose the MGS-like domain.

This sequence belongs to the PurH family.

The enzyme catalyses (6R)-10-formyltetrahydrofolate + 5-amino-1-(5-phospho-beta-D-ribosyl)imidazole-4-carboxamide = 5-formamido-1-(5-phospho-D-ribosyl)imidazole-4-carboxamide + (6S)-5,6,7,8-tetrahydrofolate. It catalyses the reaction IMP + H2O = 5-formamido-1-(5-phospho-D-ribosyl)imidazole-4-carboxamide. It participates in purine metabolism; IMP biosynthesis via de novo pathway; 5-formamido-1-(5-phospho-D-ribosyl)imidazole-4-carboxamide from 5-amino-1-(5-phospho-D-ribosyl)imidazole-4-carboxamide (10-formyl THF route): step 1/1. The protein operates within purine metabolism; IMP biosynthesis via de novo pathway; IMP from 5-formamido-1-(5-phospho-D-ribosyl)imidazole-4-carboxamide: step 1/1. The chain is Bifunctional purine biosynthesis protein PurH from Psychrobacter cryohalolentis (strain ATCC BAA-1226 / DSM 17306 / VKM B-2378 / K5).